Reading from the N-terminus, the 175-residue chain is NPCCDAATCKLKSGSQCGHGDCCEQCKFSKSGTECRASMSECDPAEHCTGQSSECPADVFHKNGQPCLDNYGYCYNGNCPIMYHQCYDLFGADVYEAEDSCFERNQKGNYYGYCRKENGNKIPCAPEDVKCGRLYSKDNSPGQNNPCKMLCSNEDEHKGRFLEQTGRGKVCSNRQ.

The Disintegrin domain occupies 1–63 (NPCCDAATCK…ECPADVFHKN (63 aa)). Intrachain disulfides connect Cys-3–Cys-26, Cys-17–Cys-23, Cys-22–Cys-48, Cys-35–Cys-55, Cys-42–Cys-74, Cys-67–Cys-79, Cys-101–Cys-147, Cys-114–Cys-124, and Cys-131–Cys-171. The short motif at 41 to 43 (ECD) is the D/ECD-tripeptide element. 5 residues coordinate Ca(2+): Asp-43, Pro-44, Glu-46, Asp-58, and Val-59.

Belongs to the venom metalloproteinase (M12B) family. P-III subfamily. P-IIIa sub-subfamily. Monomer. The cofactor is Zn(2+). Glycosylated. Expressed by the venom gland.

The protein resides in the secreted. In terms of biological role, snake venom metalloproteinase that impairs hemostasis in the envenomed animal. The polypeptide is Zinc metalloproteinase-disintegrin-like catroriarin (Crotalus atrox (Western diamondback rattlesnake)).